We begin with the raw amino-acid sequence, 138 residues long: uncharacterized protein (138 aa).

2 disordered regions span residues 1–23 (MPESAPSTPPSVNRRHEPEMLSE) and 35–83 (ASPS…EDPV). Acidic residues predominate over residues 60–69 (DEETIPEEDD).

This is an uncharacterized protein from Schizosaccharomyces pombe (strain 972 / ATCC 24843) (Fission yeast).